A 147-amino-acid polypeptide reads, in one-letter code: Deoxyuridine 5'-triphosphate nucleotidohydrolase (147 aa).

Arg24 provides a ligand contact to Mg(2+). DUTP-binding positions include 68 to 70 (PRS), 82 to 85 (GVID), Tyr88, Gly93, Ile95, and Arg111.

This sequence belongs to the dUTPase family. Mg(2+) is required as a cofactor.

It carries out the reaction dUTP + H2O = dUMP + diphosphate + H(+). This enzyme is involved in nucleotide metabolism: it produces dUMP, the immediate precursor of thymidine nucleotides and it decreases the intracellular concentration of dUTP so that uracil cannot be incorporated into DNA. The sequence is that of Deoxyuridine 5'-triphosphate nucleotidohydrolase (OPG046) from Homo sapiens (Human).